Consider the following 183-residue polypeptide: (2E)-enoyl-[ACP] glycyltransferase (183 aa).

The protein belongs to the FcoT family.

The enzyme catalyses a (3R)-3-[(carboxymethyl)amino]fatty acid + holo-[ACP] + H(+) = a (2E)-enoyl-[ACP] + glycine + H2O. It catalyses the reaction (3R)-3-[(carboxylmethyl)amino]decanoate + holo-[ACP] + H(+) = (2E)-decenoyl-[ACP] + glycine + H2O. The catalysed reaction is a fatty acyl-CoA + H2O = a fatty acid + CoA + H(+). Functionally, involved in the biosynthesis of a unique class of isonitrile lipopeptides (INLPs) that seem to play a role in metal acquisition. Catalyzes a Michael addition of glycine to the beta-position of an alpha,beta-unsaturated fatty acyl-[ACP], producing a (3R)-3-[(carboxymethyl)amino]fatty acid. Acts on the (2E)-decenoyl moiety loaded on the acyl-carrier protein (ACP) BQ2027_MB0103, forming the product (3R)-3-[(carboxymethyl)amino]decanoate released from the ACP. Displays thioesterase activity with a preference for long chain fatty acyl groups. This Mycobacterium bovis (strain ATCC BAA-935 / AF2122/97) protein is (2E)-enoyl-[ACP] glycyltransferase.